Consider the following 315-residue polypeptide: Cysteine proteinase 1 (315 aa).

A signal peptide spans 1–13 (MFTFILMFYIGYG). The propeptide at 14–93 (IDFNTWVANN…KGEVRYLNIQ (80 aa)) is activation peptide. Intrachain disulfides connect Cys-115/Cys-161 and Cys-152/Cys-193. Cys-118 is a catalytic residue. Residues His-259 and Asn-279 contribute to the active site.

It belongs to the peptidase C1 family.

It localises to the lysosome. Its activity is regulated as follows. Inhibited by cysteine protease inhibitors ICP1 and ICP2. In terms of biological role, cysteine protease which degrades matrix proteins such as collagen, laminin and fibronectin and thus is involved in the destruction of human tissue. Can abolish adhesion. May play an important role in pathogenicity. In Entamoeba histolytica (strain ATCC 30459 / HM-1:IMSS / ABRM), this protein is Cysteine proteinase 1.